Here is a 2028-residue protein sequence, read N- to C-terminus: Genome polyprotein (2028 aa).

An Alphavirus-like MT domain is found at 65-226; that stretch reads SGFGHAAHPH…TQPRSALDWL (162 aa). Disordered regions lie at residues 544-603 and 661-682; these read GSAP…ESVA and VTPG…PSAS. Residues 550-599 show a composition bias toward pro residues; it reads LSLPPPEGSLLPVEPPLAPSDPEPALEPSPPAASVPAPAPAPASEPPPSP. Over residues 668–677 the composition is skewed to basic and acidic residues; that stretch reads PEPDTARLDA. The 156-residue stretch at 669 to 824 folds into the Peptidase C21 domain; the sequence is EPDTARLDAD…SLPALVGASS (156 aa). Residues C723 and H806 each act as for protease activity in the active site. Residues 882-1039 form the (+)RNA virus helicase ATP-binding domain; it reads DPKSARERFL…YLRPYVDFYC (158 aa). In terms of domain architecture, (+)RNA virus helicase C-terminal spans 1040–1172; it reads FWSRRIPQNV…RRLSVRSLFS (133 aa). In terms of domain architecture, RdRp catalytic spans 1508–1614; the sequence is AVKLANDYTA…DSEPPVRDQW (107 aa). Residues 1828–1854 are disordered; that stretch reads SMADNATQVGPVPPRDDRVDRQPPLPD.

The protein belongs to the Tymoviridae non-structural replication polyprotein family. Specific enzymatic cleavages by the host yield mature proteins.

Its subcellular location is the virion. It catalyses the reaction RNA(n) + a ribonucleoside 5'-triphosphate = RNA(n+1) + diphosphate. It carries out the reaction Thiol-dependent hydrolysis of ester, thioester, amide, peptide and isopeptide bonds formed by the C-terminal Gly of ubiquitin (a 76-residue protein attached to proteins as an intracellular targeting signal).. Functionally, acts as a cysteine protease, methyltransferase and deubiquitinase. The cysteine protease activity cleaves the polyprotein giving rise to mature proteins. The methyltransferase domain is probably involved in viral RNA capping. The deubiquitylating activity counteracts the degradation of the viral polymerase mediated by the host ubiquitin-proteasome system. The polymerase is thus stabilized and infectivity is increased. In terms of biological role, RNA-directed RNA polymerase is responsible for the replication and transcription of the genome. Capsid protein CP1 and CP2 assemble to form an icosahedral capsid, about 30 nm in diameter, and consisting of capsid proteins CP1 and CP2 in a 1:3 ratio. The capsid encapsulates the single-stranded RNA genome. While CP1 is produced as a C-terminal fusion of the replication protein, CP2 may be expressed from a 3'-co-terminal subgenomic RNA. This Zea mays (Maize) protein is Genome polyprotein.